Consider the following 165-residue polypeptide: LOB domain-containing protein 3 (165 aa).

The region spanning 13–115 (SPCAGCKLLR…TQLAFAQAEL (103 aa)) is the LOB domain.

Belongs to the LOB domain-containing protein family. In terms of tissue distribution, expressed in young shoots, roots, stems, leaves and flowers. At the bases of lateral organs formed from vegetative, inflorescence, and floral meristems.

The protein resides in the nucleus. In Arabidopsis thaliana (Mouse-ear cress), this protein is LOB domain-containing protein 3 (LBD3).